The following is a 258-amino-acid chain: Ribonuclease HII (258 aa).

One can recognise an RNase H type-2 domain in the interval 71 to 258 (QLIAGIDEVG…PIKTMVNFKS (188 aa)). A divalent metal cation is bound by residues Asp77, Glu78, and Asp169.

Belongs to the RNase HII family. The cofactor is Mn(2+). Mg(2+) serves as cofactor.

The protein resides in the cytoplasm. The enzyme catalyses Endonucleolytic cleavage to 5'-phosphomonoester.. Functionally, endonuclease that specifically degrades the RNA of RNA-DNA hybrids. This is Ribonuclease HII (rnhB) from Lactococcus lactis subsp. lactis (strain IL1403) (Streptococcus lactis).